The chain runs to 323 residues: MIDFGNFYSLIAKNHLSHWLETLPAQIANWQREQQHGLFKQWSNAVEFLPEIKPYRLDLLHSVTAESEEPLSTGQIKRIETLMRNLMPWRKGPFSLYGVNIDTEWRSDWKWDRVLPHLSDLTGRTILDVGCGSGYHMWRMIGAGAHLAVGIDPTQLFLCQFEAVRKLLGNDQRAHLLPLGIEQLPALKAFDTVFSMGVLYHRRSPLEHLWQLKDQLVNEGELVLETLVIDGDENTVLVPGDRYAQMRNVYFIPSALALKNWLKKCGFVDIRVVDVCVTTTEEQRRTEWMVTESLSDFLDPHDPSKTVEGYPAPKRAVLIARKP.

Carboxy-S-adenosyl-L-methionine is bound by residues Lys-91, Trp-105, Lys-110, Gly-130, 152-154 (DPT), 181-182 (IE), Met-196, Tyr-200, and Arg-315.

The protein belongs to the class I-like SAM-binding methyltransferase superfamily. CmoB family. In terms of assembly, homotetramer.

It catalyses the reaction carboxy-S-adenosyl-L-methionine + 5-hydroxyuridine(34) in tRNA = 5-carboxymethoxyuridine(34) in tRNA + S-adenosyl-L-homocysteine + H(+). Its function is as follows. Catalyzes carboxymethyl transfer from carboxy-S-adenosyl-L-methionine (Cx-SAM) to 5-hydroxyuridine (ho5U) to form 5-carboxymethoxyuridine (cmo5U) at position 34 in tRNAs. This Shigella boydii serotype 18 (strain CDC 3083-94 / BS512) protein is tRNA U34 carboxymethyltransferase.